The chain runs to 379 residues: Cyclin-dependent kinase-like 4 (379 aa).

The region spanning 4-286 (YEKLAKTGEG…CSQLLESSYF (283 aa)) is the Protein kinase domain. ATP contacts are provided by residues 10 to 18 (TGEGSYGVV) and lysine 33. A [NKR]KIAxRE motif is present at residues 45–51 (KKIALRE). The active-site Proton acceptor is aspartate 126.

Belongs to the protein kinase superfamily. CMGC Ser/Thr protein kinase family. CDC2/CDKX subfamily.

The protein resides in the cytoplasm. The enzyme catalyses L-seryl-[protein] + ATP = O-phospho-L-seryl-[protein] + ADP + H(+). It carries out the reaction L-threonyl-[protein] + ATP = O-phospho-L-threonyl-[protein] + ADP + H(+). The chain is Cyclin-dependent kinase-like 4 (CDKL4) from Homo sapiens (Human).